Here is a 367-residue protein sequence, read N- to C-terminus: MNIHSRDVNETPDRSDAEQALAVLRRWAGEASETEVAQLDPAIARLLPGQELQNYPDLKRQYPDDFDANESYRATLPDLQNGPSSLIRGAKEQIQHVGISNFRLPIRFHTRDNGDLTLETSVTGTVSLDAEKKGINMSRIMRSFYKHAEKVFSFDVMEAALEDYLSDLESGDARLQMRFSFPVKVQSLRSGLSGYQYYDVALELVQMAGQRHRIVHLDYVYSSTCPCSLELSEHARQARGQLATPHSQRSVARISVQMEQDGGCLWFEDLIDHCRRAVPTETQVMVKREDEQAFAELNAANPIFVEDAARLFCEALQSDARVGDFRVVASHQESLHSHDAVSVLTQGTMFAAPSLDPQLFSTLIHRG.

It belongs to the GTP cyclohydrolase IV family.

It carries out the reaction GTP + H2O = 7,8-dihydroneopterin 3'-triphosphate + formate + H(+). It functions in the pathway cofactor biosynthesis; 7,8-dihydroneopterin triphosphate biosynthesis; 7,8-dihydroneopterin triphosphate from GTP: step 1/1. Its function is as follows. Converts GTP to 7,8-dihydroneopterin triphosphate. The chain is GTP cyclohydrolase FolE2 from Ruegeria sp. (strain TM1040) (Silicibacter sp.).